Consider the following 318-residue polypeptide: MWEKCHRQWHKIKFYVKHAHLGLLPPAWLAKSAAAELERFERAPAELRAAIENRVHYYNALSQPFFLPETAPRVCHFPRQKPSSYYYDLKALLRYFPLEQRFSAQFGDVTTIPELPQFVKSRPITKNNENAVLLKLDSVRHFYLYPDRLPFRAKKSQLVWRGAAHQNHRIRFLEHFHQHPLCDVGCIHARSAAKPYHREFMSVKRQLQYRYILSLEGNDVATNLKWIMASNSLCLMPAPRYETWMMEGRLQAGVHYVQLRDDFADLEEQILFFERYPEAAEAIIKNAQQWMSQFARPETELWTALLVMKKYFSLLEPQ.

The protein belongs to the glycosyltransferase 90 family.

Its pathway is protein modification; protein glycosylation. Involved in lipopolysaccharide core biosynthesis. The polypeptide is O-glucosyltransferase LpsA (lpsA) (Dichelobacter nodosus (Bacteroides nodosus)).